Reading from the N-terminus, the 246-residue chain is ATP synthase subunit a (246 aa).

Positions 1–3 (MIY) are cleaved as a propeptide — removed in mature form. A run of 7 helical transmembrane segments spans residues 25-45 (VNNY…SVFL), 51-71 (LGFN…LNMV), 79-99 (GGMY…ANLV), 112-132 (LVAI…MGLS), 138-158 (FFAL…LVLI), 178-198 (VLSG…LMGS), and 203-223 (FMGG…EFAI).

Belongs to the ATPase A chain family. As to quaternary structure, F-type ATPases have 2 components, CF(1) - the catalytic core - and CF(0) - the membrane proton channel. CF(1) has five subunits: alpha(3), beta(3), gamma(1), delta(1), epsilon(1). CF(0) has three main subunits: a, b and c.

Its subcellular location is the mitochondrion inner membrane. Functionally, mitochondrial membrane ATP synthase (F(1)F(0) ATP synthase or Complex V) produces ATP from ADP in the presence of a proton gradient across the membrane which is generated by electron transport complexes of the respiratory chain. F-type ATPases consist of two structural domains, F(1) - containing the extramembraneous catalytic core and F(0) - containing the membrane proton channel, linked together by a central stalk and a peripheral stalk. During catalysis, ATP synthesis in the catalytic domain of F(1) is coupled via a rotary mechanism of the central stalk subunits to proton translocation. Key component of the proton channel; it may play a direct role in the translocation of protons across the membrane. This Debaryomyces hansenii (strain ATCC 36239 / CBS 767 / BCRC 21394 / JCM 1990 / NBRC 0083 / IGC 2968) (Yeast) protein is ATP synthase subunit a (ATP6).